Reading from the N-terminus, the 297-residue chain is AKT-interacting protein (297 aa).

Positions 1–13 (MNLNPFWSMSTNT) are enriched in polar residues. Residues 1 to 45 (MNLNPFWSMSTNTGRKRSDGEEQSGEQQQQQRASPARPSFGKKQL) form a disordered region. Residues 25 to 39 (GEQQQQQRASPARPS) are compositionally biased toward low complexity. In terms of domain architecture, UBC core spans 79–227 (YLEYSLLAEF…VVDSVKLCNS (149 aa)). The segment at 262-297 (KRRPEDHHKGLQVSGLSWVKPGSTQPFSKDDNPPQN) is disordered.

The protein belongs to the ubiquitin-conjugating enzyme family. FTS subfamily.

The protein localises to the cytoplasm. Its subcellular location is the cell membrane. May function to promote vesicle trafficking and/or fusion. May also regulate apoptosis. This chain is AKT-interacting protein (aktip), found in Salmo salar (Atlantic salmon).